The following is a 48-amino-acid chain: uncharacterized protein (48 aa).

This is an uncharacterized protein from Acidianus filamentous virus 2 (isolate Italy/Pozzuoli) (AFV-2).